Here is a 218-residue protein sequence, read N- to C-terminus: Octanoyltransferase (218 aa).

Residues 27–210 (AGAEETLYLL…QFRAIFADST (184 aa)) enclose the BPL/LPL catalytic domain. Substrate-binding positions include 72–79 (RGGNITCH), 139–141 (SIG), and 152–154 (GFA). Residue C170 is the Acyl-thioester intermediate of the active site.

It belongs to the LipB family.

The protein localises to the cytoplasm. The enzyme catalyses octanoyl-[ACP] + L-lysyl-[protein] = N(6)-octanoyl-L-lysyl-[protein] + holo-[ACP] + H(+). It functions in the pathway protein modification; protein lipoylation via endogenous pathway; protein N(6)-(lipoyl)lysine from octanoyl-[acyl-carrier-protein]: step 1/2. Functionally, catalyzes the transfer of endogenously produced octanoic acid from octanoyl-acyl-carrier-protein onto the lipoyl domains of lipoate-dependent enzymes. Lipoyl-ACP can also act as a substrate although octanoyl-ACP is likely to be the physiological substrate. In Nitratidesulfovibrio vulgaris (strain DSM 19637 / Miyazaki F) (Desulfovibrio vulgaris), this protein is Octanoyltransferase.